The following is a 662-amino-acid chain: Protein distal antenna (662 aa).

The HTH psq-type domain maps to 21-72; it reads TKGKRPLRHLTATDKIDAIQRIHDGESKASVARDIGVPESTLRGWCKNEEKL. The segment at residues 48–68 is a DNA-binding region (H-T-H motif); sequence KASVARDIGVPESTLRGWCKN. Disordered regions lie at residues 265–299, 348–407, 491–537, and 558–596; these read RNAR…STPS, YSQM…PEDT, PEDL…DDEV, and QSSP…KSTC. A compositionally biased stretch (low complexity) spans 349–391; that stretch reads SQMPRPSSPQQPQSTPPTTTTTQQQQPQSSTPPTATPPIVSTP. A compositionally biased stretch (polar residues) spans 511–520; sequence FNPSPSTSIK. Over residues 527-536 the composition is skewed to acidic residues; the sequence is VDEDEDEDDE.

As to quaternary structure, homomers. Interacts with itself, danr, ey and dac to form a complex (or complexes) containing the RD factors.

It is found in the nucleus. Its function is as follows. Probable transcription factor with a role in the retinal determination (RD) network. Contributes to differentiation of antenna-specific characteristics. The protein is Protein distal antenna of Culex quinquefasciatus (Southern house mosquito).